A 502-amino-acid polypeptide reads, in one-letter code: Maturase K (502 aa).

It belongs to the intron maturase 2 family. MatK subfamily.

It localises to the plastid. The protein localises to the chloroplast. Functionally, usually encoded in the trnK tRNA gene intron. Probably assists in splicing its own and other chloroplast group II introns. The protein is Maturase K of Ipomoea purpurea (Common morning glory).